A 326-amino-acid chain; its full sequence is MSQYVVCALYKFVELENYQELREPLLALMEAHGVHGTLLLASEGINGTVAAKREGIDTLLAWLNDEPRLNGIVYKESYSDTQPFNRTKVKLKKEIVTLGVEGIDPRHVVGTYVKPQDWNDLIADPEVFVVDTRNDYEIEIGTFKGAVNPNTDTFREFPDYVKQNMDPEKHKKVAMFCTGGIRCEKSTAYMKEQGFDEVYHLEGGILKYLEEVPEEESMWEGDCYVFDGRVAVNHQLEKADYDLCNACRLPITEEDKRSEQFEQGVSCPKCFGKHSEEQVARFREREKQVSLAAVRGEQHVGGESAKQRQQRRAEKLAKKDVQRKQA.

One can recognise a Rhodanese domain in the interval 123-217 (ADPEVFVVDT…YLEEVPEEES (95 aa)). The active-site Cysteine persulfide intermediate is cysteine 177. Residues 293-326 (AVRGEQHVGGESAKQRQQRRAEKLAKKDVQRKQA) are disordered. Over residues 311–326 (RRAEKLAKKDVQRKQA) the composition is skewed to basic and acidic residues.

The protein belongs to the TrhO family.

The enzyme catalyses uridine(34) in tRNA + AH2 + O2 = 5-hydroxyuridine(34) in tRNA + A + H2O. In terms of biological role, catalyzes oxygen-dependent 5-hydroxyuridine (ho5U) modification at position 34 in tRNAs. In Vibrio campbellii (strain ATCC BAA-1116), this protein is tRNA uridine(34) hydroxylase.